Consider the following 123-residue polypeptide: Large ribosomal subunit protein bL12 (123 aa).

The protein belongs to the bacterial ribosomal protein bL12 family. Homodimer. Part of the ribosomal stalk of the 50S ribosomal subunit. Forms a multimeric L10(L12)X complex, where L10 forms an elongated spine to which 2 to 4 L12 dimers bind in a sequential fashion. Binds GTP-bound translation factors.

Its function is as follows. Forms part of the ribosomal stalk which helps the ribosome interact with GTP-bound translation factors. Is thus essential for accurate translation. This Zymomonas mobilis subsp. mobilis (strain ATCC 31821 / ZM4 / CP4) protein is Large ribosomal subunit protein bL12.